The following is a 157-amino-acid chain: uncharacterized protein (157 aa).

Disordered stretches follow at residues 76 to 105 and 132 to 157; these read AINQELHLTPHKKTSPATSSSLKPRPGPRG and VRAPSTKPSKTSSSNNPWPLTPRMRG. Residues 135-148 are compositionally biased toward low complexity; that stretch reads PSTKPSKTSSSNNP.

This sequence to M.pneumoniae MPN_091 and MPN_413.

This is an uncharacterized protein from Mycoplasma pneumoniae (strain ATCC 29342 / M129 / Subtype 1) (Mycoplasmoides pneumoniae).